The following is a 275-amino-acid chain: MSEVTSFAVFGNPIAHSKSPRIHELFAAQTGITLTYQRVLAPLDNFEQMLRQYFHDGAGGANVTAPFKERAFAEADERSECAALAGAVNTLKRLSDGRLYGDNTDGIGLLSDLQRLALVKPLDRVLLVGAGGAARGVIQPLLASGCTVVLTNRTFFKAEALAKIFCDIGDIQATALDGLHGQSFDLIINATSSGMYDSIPNLPAELISPETSCYDMFYLPQLTPFLSWCVQQGAIHYADGLGMLVGQAAHAFKLWHGVMPDVEPVIDLLKQDLAK.

Shikimate is bound by residues 17–19 (SKS) and Thr-64. The active-site Proton acceptor is Lys-68. Glu-80 lines the NADP(+) pocket. Residues Asn-89 and Asp-105 each contribute to the shikimate site. NADP(+)-binding positions include 129–133 (GAGGA), 152–157 (NRTFFK), and Met-216. Tyr-218 provides a ligand contact to shikimate. Position 240 (Gly-240) interacts with NADP(+).

Belongs to the shikimate dehydrogenase family. In terms of assembly, homodimer.

It catalyses the reaction shikimate + NADP(+) = 3-dehydroshikimate + NADPH + H(+). It functions in the pathway metabolic intermediate biosynthesis; chorismate biosynthesis; chorismate from D-erythrose 4-phosphate and phosphoenolpyruvate: step 4/7. Functionally, involved in the biosynthesis of the chorismate, which leads to the biosynthesis of aromatic amino acids. Catalyzes the reversible NADPH linked reduction of 3-dehydroshikimate (DHSA) to yield shikimate (SA). The polypeptide is Shikimate dehydrogenase (NADP(+)) (Pectobacterium atrosepticum (strain SCRI 1043 / ATCC BAA-672) (Erwinia carotovora subsp. atroseptica)).